A 542-amino-acid chain; its full sequence is Pre-mRNA-splicing factor 38B (542 aa).

The segment covering 1-12 (MANNSPALTGNS) has biased composition (polar residues). The tract at residues 1-41 (MANNSPALTGNSQPQHQAAAAVTQQQQQCGGGGGATKPAVS) is disordered. Position 2 is an N-acetylalanine (alanine 2). The residue at position 5 (serine 5) is a Phosphoserine. The segment covering 13 to 28 (QPQHQAAAAVTQQQQQ) has biased composition (low complexity). Lysine 228 is subject to N6-acetyllysine. A disordered region spans residues 233–542 (QIKTRPRKIK…KEHKSKDETV (310 aa)). Residues 244–256 (DGKEGIEEIDRHV) show a composition bias toward basic and acidic residues. The segment covering 257 to 285 (ERRRSRSPRRSLSPRRSPRRSRSRSHHRE) has biased composition (basic residues). 4 positions are modified to phosphoserine: serine 289, serine 291, serine 319, and serine 321. Over residues 292 to 328 (FDRELEREKERQRLEREAKEREKERRRSRSIDRGLDR) the composition is skewed to basic and acidic residues. A coiled-coil region spans residues 293 to 322 (DRELEREKERQRLEREAKEREKERRRSRSI). Positions 329–345 (RRSRSRERHRSRSRSRD) are enriched in basic residues. The segment covering 346 to 419 (RKGDRRDRDR…DRRHRDDKKE (74 aa)) has biased composition (basic and acidic residues). A compositionally biased stretch (basic residues) spans 420 to 447 (SKKKHSRSRSRERKHRSRSRNAGKRSRS). A Phosphoserine modification is found at serine 445. Positions 448–465 (RSKDKSSRHKNESKEKAN) are enriched in basic and acidic residues. Serine 470, serine 472, and serine 478 each carry phosphoserine. Composition is skewed to basic and acidic residues over residues 478 to 491 (SVEKRKREHSPSRE) and 498 to 520 (RSQDRSHKREHNDSKDQSDRQDH). Phosphoserine is present on residues serine 523, serine 525, and serine 530. Over residues 530 to 542 (SQEKEHKSKDETV) the composition is skewed to basic and acidic residues.

The protein belongs to the PRP38 family.

The protein localises to the nucleus. May be required for pre-mRNA splicing. The polypeptide is Pre-mRNA-splicing factor 38B (Prpf38b) (Mus musculus (Mouse)).